A 468-amino-acid chain; its full sequence is Probable citrate synthase, mitochondrial (468 aa).

Residues His303, His349, and Asp404 contribute to the active site.

It belongs to the citrate synthase family. Homodimer.

Its subcellular location is the mitochondrion matrix. It carries out the reaction oxaloacetate + acetyl-CoA + H2O = citrate + CoA + H(+). The protein operates within carbohydrate metabolism; tricarboxylic acid cycle; isocitrate from oxaloacetate: step 1/2. The chain is Probable citrate synthase, mitochondrial (cts-1) from Caenorhabditis elegans.